A 170-amino-acid chain; its full sequence is Regulator of ribonuclease activity A (170 aa).

This sequence belongs to the RraA family. Homotrimer. Binds to both RNA-binding sites in the C-terminal region of Rne and to RhlB.

The protein localises to the cytoplasm. Its function is as follows. Globally modulates RNA abundance by binding to RNase E (Rne) and regulating its endonucleolytic activity. Can modulate Rne action in a substrate-dependent manner by altering the composition of the degradosome. Modulates RNA-binding and helicase activities of the degradosome. In Psychromonas ingrahamii (strain DSM 17664 / CCUG 51855 / 37), this protein is Regulator of ribonuclease activity A.